Reading from the N-terminus, the 159-residue chain is Ribosomal RNA large subunit methyltransferase H (159 aa).

S-adenosyl-L-methionine-binding positions include L76, G108, and 127 to 132 (FSKMTF).

This sequence belongs to the RNA methyltransferase RlmH family. As to quaternary structure, homodimer.

It localises to the cytoplasm. The enzyme catalyses pseudouridine(1915) in 23S rRNA + S-adenosyl-L-methionine = N(3)-methylpseudouridine(1915) in 23S rRNA + S-adenosyl-L-homocysteine + H(+). Functionally, specifically methylates the pseudouridine at position 1915 (m3Psi1915) in 23S rRNA. In Lachnospira eligens (strain ATCC 27750 / DSM 3376 / VPI C15-48 / C15-B4) (Eubacterium eligens), this protein is Ribosomal RNA large subunit methyltransferase H.